The primary structure comprises 624 residues: Probable Xaa-Pro aminopeptidase P (624 aa).

Residues aspartate 421, aspartate 432, glutamate 530, and glutamate 544 each contribute to the Mn(2+) site.

This sequence belongs to the peptidase M24B family. Requires Mn(2+) as cofactor.

The enzyme catalyses Release of any N-terminal amino acid, including proline, that is linked to proline, even from a dipeptide or tripeptide.. In terms of biological role, catalyzes the removal of a penultimate prolyl residue from the N-termini of peptides. In Arthroderma otae (strain ATCC MYA-4605 / CBS 113480) (Microsporum canis), this protein is Probable Xaa-Pro aminopeptidase P (AMPP).